Consider the following 225-residue polypeptide: PKHD-type hydroxylase Smlt1146 (225 aa).

The region spanning 78 to 177 is the Fe2OG dioxygenase domain; that stretch reads KYLPPRFNRY…RVASFFWVQS (100 aa). Positions 96, 98, and 158 each coordinate Fe cation. Residue Arg-168 coordinates 2-oxoglutarate.

The cofactor is Fe(2+). Requires L-ascorbate as cofactor.

This is PKHD-type hydroxylase Smlt1146 from Stenotrophomonas maltophilia (strain K279a).